A 235-amino-acid polypeptide reads, in one-letter code: Intron-encoded endonuclease I-SceI (235 aa).

It belongs to the LAGLIDADG endonuclease family. As to quaternary structure, monomer. Requires Mg(2+) as cofactor.

Its subcellular location is the mitochondrion. Its function is as follows. Mitochondrial DNA endonuclease involved in intron homing. It introduces a specific double-strand break in the DNA of the 21S rRNA gene and thus mediates the insertion of an intron, containing its own coding sequence (group I intron), into an intronless gene. Specifically recognizes and cleaves the sequence 5'-TAGGGATAACAGGGTAAT-3'. This Saccharomyces cerevisiae (strain ATCC 204508 / S288c) (Baker's yeast) protein is Intron-encoded endonuclease I-SceI (SCEI).